The chain runs to 443 residues: Chromosomal replication initiator protein DnaA (443 aa).

Residues 1–80 (MTSQFASLWQ…LGESVEVRFF (80 aa)) form a domain I, interacts with DnaA modulators region. The segment at 80–104 (FTPSADSRRSEPSRRPVATEESSPP) is domain II. Residues 83 to 105 (SADSRRSEPSRRPVATEESSPPL) are disordered. A compositionally biased stretch (basic and acidic residues) spans 85–97 (DSRRSEPSRRPVA). A domain III, AAA+ region region spans residues 105–321 (LLNPKYTFDT…GALNRVIAYA (217 aa)). The ATP site is built by G149, G151, K152, and T153. Residues 322-443 (NLSGKSLTSE…QVLKEKIQRA (122 aa)) are domain IV, binds dsDNA.

The protein belongs to the DnaA family. Oligomerizes as a right-handed, spiral filament on DNA at oriC.

The protein resides in the cytoplasm. Its function is as follows. Plays an essential role in the initiation and regulation of chromosomal replication. ATP-DnaA binds to the origin of replication (oriC) to initiate formation of the DNA replication initiation complex once per cell cycle. Binds the DnaA box (a 9 base pair repeat at the origin) and separates the double-stranded (ds)DNA. Forms a right-handed helical filament on oriC DNA; dsDNA binds to the exterior of the filament while single-stranded (ss)DNA is stabiized in the filament's interior. The ATP-DnaA-oriC complex binds and stabilizes one strand of the AT-rich DNA unwinding element (DUE), permitting loading of DNA polymerase. After initiation quickly degrades to an ADP-DnaA complex that is not apt for DNA replication. Binds acidic phospholipids. In Heliobacterium modesticaldum (strain ATCC 51547 / Ice1), this protein is Chromosomal replication initiator protein DnaA.